The primary structure comprises 546 residues: MSKDPGRILIFDTTLRDGEQSPGASLNLEEKLAIAHQLARLGVDVIEAGFPFASPGDFKAVNKISNDVGKENGPIICGLARASKGDIKACYEAVSPAPKKRIHTFIATSDIHLKHKLKKSRKDVLQIVPEMVNYAKTLVEDIEFSCEDASRSDPDFLYEVIQLAISAGATTINIPDTVGFTTPSEFGKLISDINKNVPNIDEAVISVHGHNDLGLAVANFLEAVKNGARQLECTINGIGERAGNASLEELVMALHVRKSFFNSFFKRNPDSPTPLTAIRTEEITKTSRLVSNLTGMTVQPNKAIVGANAFAHESGIHQDGVLKNRLTYEIIDAKTVGLSDNKISLGKLSGRSAVRARLEEMGYDLSREDLNDAFARFKDLADRKREITDRDLEAIVSEQVQLPEAKFQLCLVQVSCGNASKPTATITLLNTADNTEDTAVSVGTGPVDAVCEALNKLAKVPNELIEFSVKSVTEGIDALGEVTIRIRRDNKIYSGHSADTDVVVAAANAYVNALNRLVFSEKKNSIHPQFDNLENSNKTFLSNPAN.

A Pyruvate carboxyltransferase domain is found at 8–271; sequence ILIFDTTLRD…NSFFKRNPDS (264 aa). The Mn(2+) site is built by Asp-17, His-208, His-210, and Asn-244. Residues 408–546 are regulatory domain; it reads QLCLVQVSCG…NKTFLSNPAN (139 aa).

The protein belongs to the alpha-IPM synthase/homocitrate synthase family. LeuA type 1 subfamily. Homodimer. Mn(2+) is required as a cofactor.

It is found in the cytoplasm. The enzyme catalyses 3-methyl-2-oxobutanoate + acetyl-CoA + H2O = (2S)-2-isopropylmalate + CoA + H(+). The protein operates within amino-acid biosynthesis; L-leucine biosynthesis; L-leucine from 3-methyl-2-oxobutanoate: step 1/4. Its function is as follows. Catalyzes the condensation of the acetyl group of acetyl-CoA with 3-methyl-2-oxobutanoate (2-ketoisovalerate) to form 3-carboxy-3-hydroxy-4-methylpentanoate (2-isopropylmalate). In Prochlorococcus marinus (strain MIT 9312), this protein is 2-isopropylmalate synthase.